We begin with the raw amino-acid sequence, 247 residues long: Chymase (247 aa).

Residues methionine 1–alanine 19 form the signal peptide. Positions glycine 20 to glutamate 21 are cleaved as a propeptide — activation peptide. The Peptidase S1 domain occupies isoleucine 22–glutamine 245. Cysteine 51 and cysteine 67 are oxidised to a cystine. Histidine 66 serves as the catalytic Charge relay system. Asparagine 80 and asparagine 103 each carry an N-linked (GlcNAc...) asparagine glycan. The active-site Charge relay system is aspartate 110. 2 cysteine pairs are disulfide-bonded: cysteine 144–cysteine 209 and cysteine 175–cysteine 188. Serine 203 (charge relay system) is an active-site residue.

This sequence belongs to the peptidase S1 family. Granzyme subfamily.

Its subcellular location is the secreted. It localises to the cytoplasmic granule. The catalysed reaction is Preferential cleavage: Phe-|-Xaa &gt; Tyr-|-Xaa &gt; Trp-|-Xaa &gt; Leu-|-Xaa.. Its function is as follows. Major secreted protease of mast cells with suspected roles in vasoactive peptide generation, extracellular matrix degradation, and regulation of gland secretion. The chain is Chymase (CMA1) from Papio hamadryas (Hamadryas baboon).